The sequence spans 345 residues: NADPH dehydrogenase (345 aa).

23 to 26 is a binding site for FMN; the sequence is SPMC. Y28 contacts substrate. A60 and Q102 together coordinate FMN. Residue 164 to 167 coordinates substrate; sequence HGAH. Residues R215 and 307-308 each bind FMN; that span reads GR.

Belongs to the NADH:flavin oxidoreductase/NADH oxidase family. NamA subfamily. In terms of assembly, homotetramer. It depends on FMN as a cofactor.

It carries out the reaction A + NADPH + H(+) = AH2 + NADP(+). In terms of biological role, catalyzes the reduction of the double bond of an array of alpha,beta-unsaturated aldehydes and ketones. It also reduces the nitro group of nitroester and nitroaromatic compounds. It could have a role in detoxification processes. In Bacillus cereus (strain B4264), this protein is NADPH dehydrogenase.